Here is a 185-residue protein sequence, read N- to C-terminus: Flavodoxin (185 aa).

The Flavodoxin-like domain maps to 4–159; that stretch reads VLVIYDTRTG…ACRRLGRRLA (156 aa).

The protein belongs to the flavodoxin family. It depends on FMN as a cofactor.

Functionally, low-potential electron donor to a number of redox enzymes. This chain is Flavodoxin (fldA), found in Aquifex aeolicus (strain VF5).